Here is a 341-residue protein sequence, read N- to C-terminus: 3-dehydroquinate synthase (341 aa).

NAD(+) is bound by residues Asp54–Lys59, Gly88–Asp92, Thr112–Thr113, Lys125, Lys133, and Thr151–Thr154. Residues Glu166, His220, and His236 each contribute to the Zn(2+) site.

Belongs to the sugar phosphate cyclases superfamily. Dehydroquinate synthase family. NAD(+) is required as a cofactor. Requires Co(2+) as cofactor. It depends on Zn(2+) as a cofactor.

The protein resides in the cytoplasm. The enzyme catalyses 7-phospho-2-dehydro-3-deoxy-D-arabino-heptonate = 3-dehydroquinate + phosphate. It participates in metabolic intermediate biosynthesis; chorismate biosynthesis; chorismate from D-erythrose 4-phosphate and phosphoenolpyruvate: step 2/7. In terms of biological role, catalyzes the conversion of 3-deoxy-D-arabino-heptulosonate 7-phosphate (DAHP) to dehydroquinate (DHQ). The chain is 3-dehydroquinate synthase from Thermococcus kodakarensis (strain ATCC BAA-918 / JCM 12380 / KOD1) (Pyrococcus kodakaraensis (strain KOD1)).